A 129-amino-acid polypeptide reads, in one-letter code: Small ribosomal subunit protein uS11 (129 aa).

Residues 107 to 129 form a disordered region; sequence IEDVTPVPHDSIRGKGGRRGRRV.

Belongs to the universal ribosomal protein uS11 family. In terms of assembly, part of the 30S ribosomal subunit.

Located on the platform of the 30S subunit. The polypeptide is Small ribosomal subunit protein uS11 (Methanoculleus marisnigri (strain ATCC 35101 / DSM 1498 / JR1)).